We begin with the raw amino-acid sequence, 101 residues long: Small ribosomal subunit protein uS14 (101 aa).

It belongs to the universal ribosomal protein uS14 family. In terms of assembly, part of the 30S ribosomal subunit. Contacts proteins S3 and S10.

Binds 16S rRNA, required for the assembly of 30S particles and may also be responsible for determining the conformation of the 16S rRNA at the A site. The sequence is that of Small ribosomal subunit protein uS14 from Acinetobacter baumannii (strain SDF).